Reading from the N-terminus, the 397-residue chain is Succinate--CoA ligase [ADP-forming] subunit beta (397 aa).

The ATP-grasp domain maps to 9-244 (KEIMKQYGIS…LTEEDPREVQ (236 aa)). ATP is bound by residues Lys46, 53 to 55 (GRG), Glu99, Leu102, and Glu107. Residues Asn199 and Asp213 each coordinate Mg(2+). Residues Asn264 and 321 to 323 (GIM) each bind substrate.

It belongs to the succinate/malate CoA ligase beta subunit family. As to quaternary structure, heterotetramer of two alpha and two beta subunits. Requires Mg(2+) as cofactor.

The enzyme catalyses succinate + ATP + CoA = succinyl-CoA + ADP + phosphate. It catalyses the reaction GTP + succinate + CoA = succinyl-CoA + GDP + phosphate. It functions in the pathway carbohydrate metabolism; tricarboxylic acid cycle; succinate from succinyl-CoA (ligase route): step 1/1. Succinyl-CoA synthetase functions in the citric acid cycle (TCA), coupling the hydrolysis of succinyl-CoA to the synthesis of either ATP or GTP and thus represents the only step of substrate-level phosphorylation in the TCA. The beta subunit provides nucleotide specificity of the enzyme and binds the substrate succinate, while the binding sites for coenzyme A and phosphate are found in the alpha subunit. This chain is Succinate--CoA ligase [ADP-forming] subunit beta, found in Alkaliphilus metalliredigens (strain QYMF).